An 80-amino-acid chain; its full sequence is Conotoxin Lt6.2 (80 aa).

The first 24 residues, 1–24, serve as a signal peptide directing secretion; the sequence is MKLTRVLIIAVLFLTAYQLTTVET. The propeptide occupies 25–47; sequence YSRGKWMHRALRSTGKNPKVTRE. Disulfide bonds link Cys-48/Cys-62, Cys-55/Cys-66, and Cys-61/Cys-73.

The protein belongs to the conotoxin O1 superfamily. As to expression, expressed by the venom duct.

Its subcellular location is the secreted. This Conus litteratus (Lettered cone) protein is Conotoxin Lt6.2.